Reading from the N-terminus, the 286-residue chain is Ribosomal RNA small subunit methyltransferase H (286 aa).

Residues 17-19, Asp-36, Phe-63, Asp-84, and Gln-91 contribute to the S-adenosyl-L-methionine site; that span reads AGH.

The protein belongs to the methyltransferase superfamily. RsmH family.

The protein resides in the cytoplasm. It catalyses the reaction cytidine(1402) in 16S rRNA + S-adenosyl-L-methionine = N(4)-methylcytidine(1402) in 16S rRNA + S-adenosyl-L-homocysteine + H(+). In terms of biological role, specifically methylates the N4 position of cytidine in position 1402 (C1402) of 16S rRNA. In Metamycoplasma arthritidis (strain 158L3-1) (Mycoplasma arthritidis), this protein is Ribosomal RNA small subunit methyltransferase H.